The chain runs to 292 residues: Probable 2-(5''-triphosphoribosyl)-3'-dephosphocoenzyme-A synthase (292 aa).

The protein belongs to the CitG/MdcB family.

The catalysed reaction is 3'-dephospho-CoA + ATP = 2'-(5''-triphospho-alpha-D-ribosyl)-3'-dephospho-CoA + adenine. Functionally, involved in the formation of 2-(5''-phosphoribosyl)-3'-dephosphocoenzyme-A, the prosthetic group of the acyl-carrier protein of the malonate decarboxylase. This chain is Probable 2-(5''-triphosphoribosyl)-3'-dephosphocoenzyme-A synthase, found in Azotobacter vinelandii (strain DJ / ATCC BAA-1303).